A 70-amino-acid chain; its full sequence is Small ribosomal subunit protein bS18 (70 aa).

It belongs to the bacterial ribosomal protein bS18 family. Part of the 30S ribosomal subunit. Forms a tight heterodimer with protein bS6.

Binds as a heterodimer with protein bS6 to the central domain of the 16S rRNA, where it helps stabilize the platform of the 30S subunit. The polypeptide is Small ribosomal subunit protein bS18 (Salinibacter ruber (strain DSM 13855 / M31)).